Consider the following 3788-residue polypeptide: Lysosomal-trafficking regulator (3788 aa).

Disordered stretches follow at residues 148–180 (KSTH…TVVS) and 198–217 (EGHL…VLSD). A Phosphoserine modification is found at S164. T165 carries the post-translational modification Phosphothreonine. Phosphoserine is present on S166. The WD 1 repeat unit spans residues 662–700 (GPTSGLPSPSYRFQGILPSSGSEDLLWKWDALEAYQSFV). Disordered stretches follow at residues 1169–1196 (LGPG…FSEE), 1213–1240 (GYEA…EAEG), and 1482–1519 (ESAA…TESI). Residues 1213–1232 (GYEADSESNPEDVDTQDDGV) show a composition bias toward acidic residues. Phosphoserine is present on residues S1503 and S1504. Residues 1576-1620 (SQENIFFPSKWQHLVLTYIQHPQGKKNVHGEISIWVSGQRKTDVI) form a WD 2 repeat. S2099, S2118, S2203, S2207, and S2254 each carry phosphoserine. Positions 2177–2221 (ANGVSRGSPRFPRARVDHKDVGTEPRSDDDSPGDESYPRRPDNLK) are disordered. Basic and acidic residues predominate over residues 2190-2205 (ARVDHKDVGTEPRSDD). 2 disordered regions span residues 2556–2581 (HDSE…SIAG) and 2659–2681 (NTSQ…HHEQ). The span at 2566-2578 (SAHRHSVPPKRRS) shows a compositional bias: basic residues. Residues 2659–2671 (NTSQSKTSVSQTE) are compositionally biased toward polar residues. In terms of domain architecture, BEACH-type PH spans 2996–3102 (AASESIRVNR…VRDDVYQSIL (107 aa)). In terms of domain architecture, BEACH spans 3126–3409 (QITNFEYLTH…QLFHTAHASR (284 aa)). WD repeat units lie at residues 3550–3589 (SQQH…STPS), 3601–3640 (GHTE…YVQS), 3643–3686 (GHKS…VGHV), 3687–3731 (HCRE…PVRE), and 3736–3775 (KSNK…RVKL).

In terms of assembly, interacts with CPAP, LIP8 and ZNF521. Expressed in the heart, lung, liver, spleen, brain and in different immune cell types (purified B and T lymphocytes, bone marrow-derived macrophages and dendritic cells).

Its subcellular location is the cytoplasm. Its function is as follows. Adapter protein that regulates and/or fission of intracellular vesicles such as lysosomes. Might regulate trafficking of effectors involved in exocytosis. In cytotoxic T-cells and natural killer (NK) cells, has role in the regulation of size, number and exocytosis of lytic granules. In macrophages and dendritic cells, regulates phagosome maturation by controlling the conversion of early phagosomal compartments into late phagosomes. In macrophages and dendritic cells, specifically involved in TLR3- and TLR4-induced production of pro-inflammatory cytokines by regulating the endosomal TLR3- TICAM1/TRIF and TLR4- TICAM1/TRIF signaling pathways. The protein is Lysosomal-trafficking regulator (Lyst) of Mus musculus (Mouse).